The sequence spans 52 residues: Ribosome modulation factor (52 aa).

This sequence belongs to the ribosome modulation factor family.

The protein resides in the cytoplasm. Its function is as follows. During stationary phase, converts 70S ribosomes to an inactive dimeric form (100S ribosomes). This is Ribosome modulation factor from Xenorhabdus nematophila (strain ATCC 19061 / DSM 3370 / CCUG 14189 / LMG 1036 / NCIMB 9965 / AN6).